A 189-amino-acid polypeptide reads, in one-letter code: UPF0301 protein Cgl3084/cg3414 (189 aa).

This sequence belongs to the UPF0301 (AlgH) family.

The chain is UPF0301 protein Cgl3084/cg3414 from Corynebacterium glutamicum (strain ATCC 13032 / DSM 20300 / JCM 1318 / BCRC 11384 / CCUG 27702 / LMG 3730 / NBRC 12168 / NCIMB 10025 / NRRL B-2784 / 534).